Here is a 140-residue protein sequence, read N- to C-terminus: Heavy metal-associated isoprenylated plant protein 31 (140 aa).

The region spanning 3 to 67 (MTVEIRVPNL…AVRRAGKAAE (65 aa)) is the HMA domain. Residues Cys-14 and Cys-17 each contribute to the a metal cation site. Cys-137 carries the post-translational modification Cysteine methyl ester. Cys-137 carries S-farnesyl cysteine lipidation. A propeptide spans 138 to 140 (TIM) (removed in mature form).

It belongs to the HIPP family.

In terms of biological role, heavy-metal-binding protein. The protein is Heavy metal-associated isoprenylated plant protein 31 of Arabidopsis thaliana (Mouse-ear cress).